A 220-amino-acid polypeptide reads, in one-letter code: Deoxyribose-phosphate aldolase (220 aa).

Asp89 (proton donor/acceptor) is an active-site residue. Residue Lys150 is the Schiff-base intermediate with acetaldehyde of the active site. Lys182 serves as the catalytic Proton donor/acceptor.

This sequence belongs to the DeoC/FbaB aldolase family. DeoC type 1 subfamily.

The protein localises to the cytoplasm. It catalyses the reaction 2-deoxy-D-ribose 5-phosphate = D-glyceraldehyde 3-phosphate + acetaldehyde. It functions in the pathway carbohydrate degradation; 2-deoxy-D-ribose 1-phosphate degradation; D-glyceraldehyde 3-phosphate and acetaldehyde from 2-deoxy-alpha-D-ribose 1-phosphate: step 2/2. Its function is as follows. Catalyzes a reversible aldol reaction between acetaldehyde and D-glyceraldehyde 3-phosphate to generate 2-deoxy-D-ribose 5-phosphate. The polypeptide is Deoxyribose-phosphate aldolase (Mycoplasmoides pirum (Mycoplasma pirum)).